The sequence spans 574 residues: MAALAVNKPGAGVDSGRQGSRGTAVVKVLECGVCEDVFSLQGDKVPRLLLCGHTVCHDCLTRLPLHGRAIRCPFDRQVTDLGDSGVWGLKKNFALLELLERLQNGHIGQYGAAEEAIGTSGESIIRCDEDEAHVASVYCTVCATHLCSDCSQVTHSTKTLAKHRRVPLADKPHEKTMCCQHQVHAIEFVCLEEGCQTSPLMCCVCKEYGKHQGHKHSVLEPEANQIRASILDMAHCIRTFTEEISDYSRKLVGIVQHIEGGEQIVEDGIGMAHTEHVPGTAENARSCVRAYFSDLHETLCRQEEMALSVVDAHVREKLIWLRQQQEDMTILLSQVSTACLHCEKTLQQDDCRVVLAKQEITRLLETLQKQQQQFTEVADHIQLDASIPVTFTKDNRVHIGPKMEIRVVTLGLDGAGKTTILFKLKQDEFMQPIPTIGFNVETVEYKNLKFTIWDVGGKHKLRPLWKHYYLNTQAVVFVVDSSHRDRISEAHSELAKLLTEKELRDALLLIFANKQDVAGALSVEEITELLSLHKLCCGRSWYIQGCDARSGMGLYEGLDWLSRQLVAAGVLDVA.

The RING-type; degenerate zinc finger occupies Cys31–Arg76. Residues Glu122–Leu168 form a B box-type; degenerate zinc finger. Residues Arg352 to Asp379 adopt a coiled-coil conformation. The ARF-like stretch occupies residues Thr390 to Ala574. GTP-binding positions include Gly411–Thr418, Asp454–Lys458, and Asn513–Asp516.

The protein in the C-terminal section; belongs to the small GTPase superfamily. Arf family. In terms of assembly, homodimer. Interacts with PSCD1. Interacts with UBE2D2. Interacts with TBK1 (via N-terminal kinase domain) and p62/SQSTM1.

It localises to the cytoplasm. Its subcellular location is the endomembrane system. The protein resides in the golgi apparatus membrane. It is found in the lysosome membrane. It catalyses the reaction S-ubiquitinyl-[E2 ubiquitin-conjugating enzyme]-L-cysteine + [acceptor protein]-L-lysine = [E2 ubiquitin-conjugating enzyme]-L-cysteine + N(6)-ubiquitinyl-[acceptor protein]-L-lysine.. The protein operates within protein modification; protein ubiquitination. Acts as an E3 ubiquitin-protein ligase. Plays an essential role in autophagy activation during viral infection. Mechanistically, activates TANK-binding kinase 1/TBK1 by facilitating its dimerization and ability to phosphorylate the selective autophagy receptor SQSTM1. In order to achieve this function, TRIM23 mediates 'Lys-27'-linked auto-ubiquitination of its ADP-ribosylation factor (ARF) domain to induce its GTPase activity and its recruitment to autophagosomes. This is E3 ubiquitin-protein ligase TRIM23 (Trim23) from Mus musculus (Mouse).